The sequence spans 136 residues: Ribonuclease VapC1 (136 aa).

Residues 18–129 (ILVDTSVLID…KKHFERLKEF (112 aa)) form the PINc domain. The Mg(2+) site is built by Asp-21 and Asp-101.

Belongs to the PINc/VapC protein family. Mg(2+) is required as a cofactor.

Toxic component of a type II toxin-antitoxin (TA) system. An RNase. Its cognate antitoxin is VapB1. The protein is Ribonuclease VapC1 of Methanocaldococcus jannaschii (strain ATCC 43067 / DSM 2661 / JAL-1 / JCM 10045 / NBRC 100440) (Methanococcus jannaschii).